Consider the following 389-residue polypeptide: Acetylornithine aminotransferase (389 aa).

Residues 96–97 (GT) and Phe-123 contribute to the pyridoxal 5'-phosphate site. Position 126 (Arg-126) interacts with N(2)-acetyl-L-ornithine. Pyridoxal 5'-phosphate is bound at residue 207–210 (DEVQ). Lys-236 bears the N6-(pyridoxal phosphate)lysine mark. Ser-264 is a binding site for N(2)-acetyl-L-ornithine. Residue Thr-265 participates in pyridoxal 5'-phosphate binding.

The protein belongs to the class-III pyridoxal-phosphate-dependent aminotransferase family. ArgD subfamily. In terms of assembly, homodimer. Pyridoxal 5'-phosphate is required as a cofactor.

It localises to the cytoplasm. The enzyme catalyses N(2)-acetyl-L-ornithine + 2-oxoglutarate = N-acetyl-L-glutamate 5-semialdehyde + L-glutamate. It participates in amino-acid biosynthesis; L-arginine biosynthesis; N(2)-acetyl-L-ornithine from L-glutamate: step 4/4. The sequence is that of Acetylornithine aminotransferase from Lactiplantibacillus plantarum (strain ATCC BAA-793 / NCIMB 8826 / WCFS1) (Lactobacillus plantarum).